A 196-amino-acid chain; its full sequence is RNA-free ribonuclease P (196 aa).

It belongs to the HARP family.

The catalysed reaction is Endonucleolytic cleavage of RNA, removing 5'-extranucleotides from tRNA precursor.. Its function is as follows. RNA-free RNase P that catalyzes the removal of the 5'-leader sequence from pre-tRNA to produce the mature 5'-terminus. This chain is RNA-free ribonuclease P, found in Thermodesulfovibrio yellowstonii (strain ATCC 51303 / DSM 11347 / YP87).